Here is a 501-residue protein sequence, read N- to C-terminus: Aldehyde dehydrogenase 1A1 (501 aa).

S2 is modified (N-acetylserine). N6-acetyllysine occurs at positions 91 and 128. Residues 167-170, 193-196, 226-227, and 246-247 each bind NAD(+); these read IPWN, KPAE, GP, and GS. An N6-acetyllysine modification is found at K252. E269 acts as the Proton acceptor in catalysis. 269–271 provides a ligand contact to NAD(+); it reads ELG. The Nucleophile role is filled by C303. A mediates interaction with PRMT3 region spans residues 336-501; sequence LTQGINQGPQ…VAMKISQKNS (166 aa). T337 carries the post-translational modification Phosphothreonine. 349–353 serves as a coordination point for NAD(+); it reads EQHDK. Residues K353 and K367 each carry the N6-acetyllysine modification. 400–402 provides a ligand contact to NAD(+); that stretch reads EIF. Residue K410 is modified to N6-acetyllysine. S413 is subject to Phosphoserine. 3 positions are modified to N6-acetyllysine: K419, K435, and K495.

It belongs to the aldehyde dehydrogenase family. Homotetramer. Interacts with PRMT3; the interaction is direct, inhibits ALDH1A1 aldehyde dehydrogenase activity and is independent of the methyltransferase activity of PRMT3. In terms of processing, the N-terminus is blocked most probably by acetylation. Strongly expressed in kidney, lung, testis, intestine, stomach, and trachea, but weakly in the liver.

The protein localises to the cytoplasm. It is found in the cytosol. The protein resides in the cell projection. It localises to the axon. It carries out the reaction an aldehyde + NAD(+) + H2O = a carboxylate + NADH + 2 H(+). It catalyses the reaction all-trans-retinal + NAD(+) + H2O = all-trans-retinoate + NADH + 2 H(+). The catalysed reaction is 9-cis-retinal + NAD(+) + H2O = 9-cis-retinoate + NADH + 2 H(+). The enzyme catalyses 11-cis-retinal + NAD(+) + H2O = 11-cis-retinoate + NADH + 2 H(+). It carries out the reaction 13-cis-retinal + NAD(+) + H2O = 13-cis-retinoate + NADH + 2 H(+). It catalyses the reaction 3-deoxyglucosone + NAD(+) + H2O = 2-dehydro-3-deoxy-D-gluconate + NADH + 2 H(+). The catalysed reaction is (E)-4-hydroxynon-2-enal + NAD(+) + H2O = (E)-4-hydroxynon-2-enoate + NADH + 2 H(+). The enzyme catalyses malonaldehyde + NAD(+) + H2O = 3-oxopropanoate + NADH + 2 H(+). It carries out the reaction hexanal + NAD(+) + H2O = hexanoate + NADH + 2 H(+). It catalyses the reaction propanal + NAD(+) + H2O = propanoate + NADH + 2 H(+). The catalysed reaction is acetaldehyde + NAD(+) + H2O = acetate + NADH + 2 H(+). The enzyme catalyses benzaldehyde + NAD(+) + H2O = benzoate + NADH + 2 H(+). It carries out the reaction 4-aminobutanal + NAD(+) + H2O = 4-aminobutanoate + NADH + 2 H(+). It functions in the pathway cofactor metabolism; retinol metabolism. Inhibited by chloral hydrate. Cytosolic dehydrogenase that catalyzes the irreversible oxidation of a wide range of aldehydes to their corresponding carboxylic acid. Functions downstream of retinol dehydrogenases and catalyzes the oxidation of retinaldehyde into retinoic acid, the second step in the oxidation of retinol/vitamin A into retinoic acid. This pathway is crucial to control the levels of retinol and retinoic acid, two important molecules which excess can be teratogenic and cytotoxic. Also oxidizes aldehydes resulting from lipid peroxidation like (E)-4-hydroxynon-2-enal/HNE, malonaldehyde and hexanal that form protein adducts and are highly cytotoxic. By participating for instance to the clearance of (E)-4-hydroxynon-2-enal/HNE in the lens epithelium prevents the formation of HNE-protein adducts and lens opacification. Functions also downstream of fructosamine-3-kinase in the fructosamine degradation pathway by catalyzing the oxidation of 3-deoxyglucosone, the carbohydrate product of fructosamine 3-phosphate decomposition, which is itself a potent glycating agent that may react with lysine and arginine side-chains of proteins. Also has an aminobutyraldehyde dehydrogenase activity and is probably part of an alternative pathway for the biosynthesis of GABA/4-aminobutanoate in midbrain, thereby playing a role in GABAergic synaptic transmission. This is Aldehyde dehydrogenase 1A1 from Rattus norvegicus (Rat).